The primary structure comprises 274 residues: Putative bidirectional sugar transporter SWEET7d (274 aa).

The Extracellular segment spans residues 1–8 (MVPDLIRN). A helical membrane pass occupies residues 9 to 29 (VVGIVGNVISFGLFLSPVPTF). The MtN3/slv 1 domain maps to 9 to 96 (VVGIVGNVIS…TIFFLFSDKK (88 aa)). The Cytoplasmic portion of the chain corresponds to 30-45 (WRIIKNKDVRDFKADQ). The helical transmembrane segment at 46 to 66 (YLATLLNCMLWVFYGLPIVHP) threads the bilayer. At 67 to 68 (NS) the chain is on the extracellular side. A helical transmembrane segment spans residues 69 to 89 (ILVVTINGIGLVIEAVYLTIF). Residues 90-100 (FLFSDKKNKKK) are Cytoplasmic-facing. A helical membrane pass occupies residues 101-121 (MGVVLATEALFMAAVALGVLL). At 122 to 130 (DAHTHQRRS) the chain is on the extracellular side. Residues 131–151 (LIVGILCVIFGTIMYSSPLTI) form a helical membrane-spanning segment. One can recognise a MtN3/slv 2 domain in the interval 132–214 (IVGILCVIFG…QLILYAIYYR (83 aa)). Topologically, residues 152 to 164 (MSQVVKTKSVEYM) are cytoplasmic. Residues 165–185 (PLLLSVVSFLNGLCWTSYALI) traverse the membrane as a helical segment. Residues 186-188 (RFD) are Extracellular-facing. A helical transmembrane segment spans residues 189 to 209 (IFITIPNGLGVLFALMQLILY). The Cytoplasmic segment spans residues 210–274 (AIYYRTTPKK…SISRLSHKLA (65 aa)). A disordered region spans residues 218–274 (KKPSTTGPHPRSRIRTSSYQPSPPSPRAPASSPLSARTTTSMAAMSPSISRLSHKLA). The segment covering 245–258 (APASSPLSARTTTS) has biased composition (low complexity).

The protein belongs to the SWEET sugar transporter family. In terms of assembly, forms homooligomers and/or heterooligomers.

The protein localises to the cell membrane. In terms of biological role, mediates both low-affinity uptake and efflux of sugar across the plasma membrane. This is Putative bidirectional sugar transporter SWEET7d (SWEET7D) from Oryza sativa subsp. japonica (Rice).